The sequence spans 509 residues: Pentatricopeptide repeat-containing protein At2g13420, mitochondrial (509 aa).

The transit peptide at M1–R19 directs the protein to the mitochondrion. 8 PPR repeats span residues R172 to E202, D206 to P240, N241 to P285, D286 to P320, T321 to P355, S356 to P390, S391 to P425, and D426 to P460.

The protein belongs to the PPR family. P subfamily.

Its subcellular location is the mitochondrion. This is Pentatricopeptide repeat-containing protein At2g13420, mitochondrial from Arabidopsis thaliana (Mouse-ear cress).